The following is a 532-amino-acid chain: Probable cytochrome c oxidase subunit 1 (532 aa).

8 consecutive transmembrane segments (helical) span residues 33 to 53 (IMYIIFAIFAGIVGGLFSLLF), 74 to 94 (VLITAHAVIMVFFMIMPALFG), 95 to 115 (GFGNYFVPLLIGAPDMAFPRL), 118 to 138 (ISFWLLVPAFILLMGSAFVDG), 163 to 183 (MAIFSLHLTGLSSILGSINLI), 200 to 220 (PLFVWSILVTAFLIILAMPVL), 252 to 272 (LFWFFGHPEVYIVILPGFGIV), and 284 to 304 (IFGYQGMVGAMVIIGFVGFIV). Position 79 (His79) interacts with Fe(II)-heme a. Positions 258 and 262 each coordinate Cu cation. Cu cation contacts are provided by His307 and His308. 2 consecutive transmembrane segments (helical) span residues 318 to 338 (ALIYFTAGTMIIAIPTGIKIF) and 355 to 375 (MLFSIGFIILFTIGGVTGIIL). Residue His393 participates in heme a3 binding. Transmembrane regions (helical) follow at residues 394 to 414 (FHYTMSLGALFTAFAGFYYWF), 431 to 451 (FWITFVGVNLTFFPQHFLGLA), and 473 to 493 (IGAGISMAAALYFVFIVFYTL). Position 395 (His395) interacts with Fe(II)-heme a.

It belongs to the heme-copper respiratory oxidase family.

It is found in the cell membrane. The enzyme catalyses 4 Fe(II)-[cytochrome c] + O2 + 8 H(+)(in) = 4 Fe(III)-[cytochrome c] + 2 H2O + 4 H(+)(out). It participates in energy metabolism; oxidative phosphorylation. Cytochrome c oxidase is the component of the respiratory chain that catalyzes the reduction of oxygen to water. Subunits 1-3 form the functional core of the enzyme complex. CO I is the catalytic subunit of the enzyme. Electrons originating in cytochrome c are transferred via the copper A center of subunit 2 and heme A of subunit 1 to the bimetallic center formed by heme A3 and copper B. This chain is Probable cytochrome c oxidase subunit 1 (ctaD), found in Rickettsia bellii (strain RML369-C).